A 123-amino-acid chain; its full sequence is Protein LLP homolog (123 aa).

Residues 1 to 21 (MAKSIRSKWKRKMRAEKRKKN) are compositionally biased toward basic residues. Disordered regions lie at residues 1 to 23 (MAKS…KNAP) and 55 to 123 (KINE…KLAW). A compositionally biased stretch (basic and acidic residues) spans 70 to 89 (DSSKMDMELKRNKKNLRDQH). The segment covering 100 to 123 (QQKKLKSQCGKKKGKSKQAKKLAW) has biased composition (basic residues).

It belongs to the learning-associated protein family.

The protein localises to the nucleus. It localises to the nucleolus. The protein resides in the chromosome. Its function is as follows. Regulates dendritic and spine growth and synaptic transmission. The sequence is that of Protein LLP homolog (llph) from Xenopus tropicalis (Western clawed frog).